Consider the following 152-residue polypeptide: Transcriptional repressor NrdR (152 aa).

A zinc finger lies at 3-33 (CSICKKGETSVVDSRPTEDGTAIRRRRLCVC). The ATP-cone domain maps to 48 to 138 (IMVVKKNGRK…VYRNFREEKD (91 aa)).

This sequence belongs to the NrdR family. Zn(2+) serves as cofactor.

In terms of biological role, negatively regulates transcription of bacterial ribonucleotide reductase nrd genes and operons by binding to NrdR-boxes. The protein is Transcriptional repressor NrdR of Pelagibacter ubique (strain HTCC1062).